The chain runs to 182 residues: UPF0149 protein HI_0817 (182 aa).

It belongs to the UPF0149 family.

The protein is UPF0149 protein HI_0817 of Haemophilus influenzae (strain ATCC 51907 / DSM 11121 / KW20 / Rd).